Reading from the N-terminus, the 615-residue chain is ATP-dependent zinc metalloprotease FtsH 2 (615 aa).

The Cytoplasmic portion of the chain corresponds to 1–7; the sequence is MNEPNRN. The chain crosses the membrane as a helical span at residues 8 to 28; sequence FFWIFFLILGIFWLQSVWFGS. Residues 29–99 are Periplasmic-facing; it reads RTVQQIPYSQ…VTYRREIENT (71 aa). A helical transmembrane segment spans residues 100 to 120; that stretch reads FFRDLLSWVVPALIFVAVFLY. Residues 121–615 lie on the Cytoplasmic side of the membrane; the sequence is FSRKFAEKGG…APQRERDLSV (495 aa). 195-202 provides a ligand contact to ATP; the sequence is GPPGTGKT. His418 contacts Zn(2+). The active site involves Glu419. Residues His422 and Asp495 each coordinate Zn(2+).

It in the central section; belongs to the AAA ATPase family. This sequence in the C-terminal section; belongs to the peptidase M41 family. In terms of assembly, homohexamer. The cofactor is Zn(2+).

It is found in the cell inner membrane. Its function is as follows. Acts as a processive, ATP-dependent zinc metallopeptidase for both cytoplasmic and membrane proteins. Plays a role in the quality control of integral membrane proteins. The sequence is that of ATP-dependent zinc metalloprotease FtsH 2 from Bdellovibrio bacteriovorus (strain ATCC 15356 / DSM 50701 / NCIMB 9529 / HD100).